The chain runs to 206 residues: LOB domain-containing protein 35 (206 aa).

The 102-residue stretch at 4-105 (TCCSACKVMK…EQINSAKNEL (102 aa)) folds into the LOB domain. Positions 184-206 (ASTSGGTSATQKTLPFPQNHNQP) are disordered.

It belongs to the LOB domain-containing protein family.

The protein is LOB domain-containing protein 35 (LBD35) of Arabidopsis thaliana (Mouse-ear cress).